We begin with the raw amino-acid sequence, 227 residues long: Uracil-DNA glycosylase 2 (227 aa).

The active-site Proton acceptor is the D67.

This sequence belongs to the uracil-DNA glycosylase (UDG) superfamily. UNG family.

It localises to the cytoplasm. The enzyme catalyses Hydrolyzes single-stranded DNA or mismatched double-stranded DNA and polynucleotides, releasing free uracil.. Its function is as follows. Excises uracil residues from the DNA which can arise as a result of misincorporation of dUMP residues by DNA polymerase or due to deamination of cytosine. This is Uracil-DNA glycosylase 2 (ung2) from Streptomyces avermitilis (strain ATCC 31267 / DSM 46492 / JCM 5070 / NBRC 14893 / NCIMB 12804 / NRRL 8165 / MA-4680).